Here is a 482-residue protein sequence, read N- to C-terminus: Cilia- and flagella-associated protein 53 (482 aa).

3 coiled-coil regions span residues 9–40 (DARIQKMRELEERLANLKADRKVEQKMVAVAE), 67–124 (ADLN…QALA), and 152–413 (IEER…AKDA). Residues 462–482 (VNQTLSSTDPPVWHGRRKFDW) form a disordered region.

The protein belongs to the CFAP53 family.

The protein resides in the cell projection. It localises to the cilium. The protein localises to the flagellum. In terms of biological role, may play a role in filopodium movement. The chain is Cilia- and flagella-associated protein 53 from Chlamydomonas reinhardtii (Chlamydomonas smithii).